The following is a 298-amino-acid chain: UPF0282 protein Kcr_0286 (298 aa).

Belongs to the UPF0282 family.

This is UPF0282 protein Kcr_0286 from Korarchaeum cryptofilum (strain OPF8).